Here is a 198-residue protein sequence, read N- to C-terminus: MEITIEMIKELRERTGAGVMEAKKALEEANGDMEKAVTILREKGVIKAAKKAGRVAKEGIIEAYIHTGDKLGVLVEVNCETDFVARTDEFRKLAKDIALQIAGMNPQYVSKEDVPPEVIEKEKEIYRTQLKNEGKPEHVIEKIIEGKLEKFYEEVCLLEQPFVRNPEIKVKDLITEAISKLGENIVVRRFARFVVGED.

The interval 81-84 (TDFV) is involved in Mg(2+) ion dislocation from EF-Tu.

Belongs to the EF-Ts family.

It is found in the cytoplasm. Functionally, associates with the EF-Tu.GDP complex and induces the exchange of GDP to GTP. It remains bound to the aminoacyl-tRNA.EF-Tu.GTP complex up to the GTP hydrolysis stage on the ribosome. This Dictyoglomus thermophilum (strain ATCC 35947 / DSM 3960 / H-6-12) protein is Elongation factor Ts.